A 572-amino-acid polypeptide reads, in one-letter code: Ribonuclease Y (572 aa).

Residues 1–21 (MPTLYVILSLLLGLIGGVLVQ) traverse the membrane as a helical segment. Disordered regions lie at residues 59–85 (HEAA…DAAE) and 110–142 (QLEA…ERED). Basic and acidic residues-rich tracts occupy residues 110–119 (QLEAEREQAK) and 129–142 (LSTD…ERED). The KH domain occupies 262-322 (SVSVVPIPSD…LRREVARHVL (61 aa)). Positions 388–481 (VLKHSVQVAH…VAAADAISAA (94 aa)) constitute an HD domain.

The protein belongs to the RNase Y family.

It is found in the cell membrane. Functionally, endoribonuclease that initiates mRNA decay. This Deinococcus radiodurans (strain ATCC 13939 / DSM 20539 / JCM 16871 / CCUG 27074 / LMG 4051 / NBRC 15346 / NCIMB 9279 / VKM B-1422 / R1) protein is Ribonuclease Y.